Here is a 216-residue protein sequence, read N- to C-terminus: Thiamine-phosphate synthase (216 aa).

Residues 41-45 (QYREK) and Asn73 contribute to the 4-amino-2-methyl-5-(diphosphooxymethyl)pyrimidine site. Positions 74 and 93 each coordinate Mg(2+). Ser111 contributes to the 4-amino-2-methyl-5-(diphosphooxymethyl)pyrimidine binding site. 137 to 139 (TTT) is a binding site for 2-[(2R,5Z)-2-carboxy-4-methylthiazol-5(2H)-ylidene]ethyl phosphate. Position 140 (Lys140) interacts with 4-amino-2-methyl-5-(diphosphooxymethyl)pyrimidine. Residues Gly168 and 188–189 (VS) contribute to the 2-[(2R,5Z)-2-carboxy-4-methylthiazol-5(2H)-ylidene]ethyl phosphate site.

This sequence belongs to the thiamine-phosphate synthase family. It depends on Mg(2+) as a cofactor.

It carries out the reaction 2-[(2R,5Z)-2-carboxy-4-methylthiazol-5(2H)-ylidene]ethyl phosphate + 4-amino-2-methyl-5-(diphosphooxymethyl)pyrimidine + 2 H(+) = thiamine phosphate + CO2 + diphosphate. The catalysed reaction is 2-(2-carboxy-4-methylthiazol-5-yl)ethyl phosphate + 4-amino-2-methyl-5-(diphosphooxymethyl)pyrimidine + 2 H(+) = thiamine phosphate + CO2 + diphosphate. The enzyme catalyses 4-methyl-5-(2-phosphooxyethyl)-thiazole + 4-amino-2-methyl-5-(diphosphooxymethyl)pyrimidine + H(+) = thiamine phosphate + diphosphate. It participates in cofactor biosynthesis; thiamine diphosphate biosynthesis; thiamine phosphate from 4-amino-2-methyl-5-diphosphomethylpyrimidine and 4-methyl-5-(2-phosphoethyl)-thiazole: step 1/1. Functionally, condenses 4-methyl-5-(beta-hydroxyethyl)thiazole monophosphate (THZ-P) and 2-methyl-4-amino-5-hydroxymethyl pyrimidine pyrophosphate (HMP-PP) to form thiamine monophosphate (TMP). The polypeptide is Thiamine-phosphate synthase (Chloroflexus aurantiacus (strain ATCC 29366 / DSM 635 / J-10-fl)).